The sequence spans 562 residues: Serine palmitoyltransferase 2 (562 aa).

A helical transmembrane segment spans residues 67–87 (PMLVAVLTYVGYGVLTLFGYL). The residue at position 379 (Lys379) is an N6-(pyridoxal phosphate)lysine.

Belongs to the class-II pyridoxal-phosphate-dependent aminotransferase family. Component of the serine palmitoyltransferase (SPT) complex, which is composed of SPTLC1, SPTLC2 or SPTLC3 and SPTSSA or SPTSSB. The heterodimer consisting of SPTLC1 and SPTLC2/SPTLC3 forms the catalytic core of the enzyme, while SPTSSA or SPTSSB subunits determine substrate specificity. SPT also interacts with ORMDL proteins, especially ORMDL3, which negatively regulate SPT activity in the presence of ceramides. Forms dimers of heterodimers with SPTLC1. It depends on pyridoxal 5'-phosphate as a cofactor. As to expression, widely expressed.

The protein localises to the endoplasmic reticulum membrane. The catalysed reaction is L-serine + hexadecanoyl-CoA + H(+) = 3-oxosphinganine + CO2 + CoA. It catalyses the reaction octadecanoyl-CoA + L-serine + H(+) = 3-oxoeicosasphinganine + CO2 + CoA. The protein operates within lipid metabolism; sphingolipid metabolism. Its activity is regulated as follows. SPT complex catalytic activity is negatively regulated by ORMDL proteins, including ORMDL3, in the presence of ceramides. This mechanism allows to maintain ceramide levels at sufficient concentrations for the production of complex sphingolipids, but which prevents the accumulation of ceramides to levels that trigger apoptosis. In terms of biological role, component of the serine palmitoyltransferase multisubunit enzyme (SPT) that catalyzes the initial and rate-limiting step in sphingolipid biosynthesis by condensing L-serine and activated acyl-CoA (most commonly palmitoyl-CoA) to form long-chain bases. The SPT complex is composed of SPTLC1, SPTLC2 or SPTLC3 and SPTSSA or SPTSSB. Within this complex, the heterodimer consisting of SPTLC1 and SPTLC2/SPTLC3 forms the catalytic core. The composition of the serine palmitoyltransferase (SPT) complex determines the substrate preference. The SPTLC1-SPTLC2-SPTSSA complex shows a strong preference for C16-CoA substrate, while the SPTLC1-SPTLC3-SPTSSA isozyme uses both C14-CoA and C16-CoA as substrates, with a slight preference for C14-CoA. The SPTLC1-SPTLC2-SPTSSB complex shows a strong preference for C18-CoA substrate, while the SPTLC1-SPTLC3-SPTSSB isozyme displays an ability to use a broader range of acyl-CoAs, without apparent preference. Crucial for adipogenesis. This Homo sapiens (Human) protein is Serine palmitoyltransferase 2.